We begin with the raw amino-acid sequence, 206 residues long: Glutathione S-transferase class-mu 28 kDa isozyme (206 aa).

One can recognise a GST N-terminal domain in the interval 1-81; that stretch reads VKLIYFNGRG…FIARKHNMMG (81 aa). Residues tyrosine 5, 5-6, arginine 11, 36-40, leucine 48, 50-51, and 65-66 contribute to the glutathione site; these read YF, WPKIK, IV, and ES. In terms of domain architecture, GST C-terminal spans 83–206; the sequence is TDDEYYIIEK…YLSERHATAF (124 aa).

Belongs to the GST superfamily. Mu family. Homodimer.

The catalysed reaction is RX + glutathione = an S-substituted glutathione + a halide anion + H(+). Conjugation of reduced glutathione to a wide number of exogenous and endogenous hydrophobic electrophiles. Its function is as follows. GST isoenzymes appear to play a central role in the parasite detoxification system. Other functions are also suspected including a role in increasing the solubility of haematin in the parasite gut. This is Glutathione S-transferase class-mu 28 kDa isozyme from Schistosoma japonicum (Blood fluke).